The sequence spans 251 residues: Imidazole glycerol phosphate synthase subunit HisF (251 aa).

Residues Asp-12 and Asp-131 contribute to the active site.

It belongs to the HisA/HisF family. As to quaternary structure, heterodimer of HisH and HisF.

It is found in the cytoplasm. It carries out the reaction 5-[(5-phospho-1-deoxy-D-ribulos-1-ylimino)methylamino]-1-(5-phospho-beta-D-ribosyl)imidazole-4-carboxamide + L-glutamine = D-erythro-1-(imidazol-4-yl)glycerol 3-phosphate + 5-amino-1-(5-phospho-beta-D-ribosyl)imidazole-4-carboxamide + L-glutamate + H(+). Its pathway is amino-acid biosynthesis; L-histidine biosynthesis; L-histidine from 5-phospho-alpha-D-ribose 1-diphosphate: step 5/9. IGPS catalyzes the conversion of PRFAR and glutamine to IGP, AICAR and glutamate. The HisF subunit catalyzes the cyclization activity that produces IGP and AICAR from PRFAR using the ammonia provided by the HisH subunit. The protein is Imidazole glycerol phosphate synthase subunit HisF of Helicobacter hepaticus (strain ATCC 51449 / 3B1).